Here is a 392-residue protein sequence, read N- to C-terminus: Multidrug resistance protein MdtL (392 aa).

12 helical membrane passes run 4–24 (FLLC…MYLV), 38–58 (AQLH…MLFA), 70–90 (VAIV…QAHA), 95–115 (LVGR…AFAI), 131–151 (LLNG…HLIM), 158–178 (SLFY…VFIL), 209–229 (ILIT…SPVL), 246–266 (ALMA…LSLF), 270–290 (TLML…SLAT), 294–314 (LTLI…GVAM), 331–351 (VLGI…AIIG), and 357–377 (MLIG…LVVT).

Belongs to the major facilitator superfamily. DHA1 family. MdtL (TC 2.A.1.2.22) subfamily.

Its subcellular location is the cell inner membrane. The chain is Multidrug resistance protein MdtL from Klebsiella pneumoniae (strain 342).